Consider the following 429-residue polypeptide: Endo-beta-1,4-galactanase (429 aa).

The first 21 residues, 1–21 (MKSKVKMFFAAAIVWSACSST), serve as a signal peptide directing secretion. Residue 146–149 (DPAK) participates in substrate binding. Residue Glu-194 is the Proton donor of the active site. Substrate contacts are provided by residues 233–234 (TN) and His-267. Glu-292 acts as the Nucleophile in catalysis. Thr-296 contacts substrate. Ca(2+) is bound by residues Asp-301, Asp-303, His-305, and Asn-307. Substrate-binding residues include Lys-311 and Asp-388. 2 residues coordinate Ca(2+): Ser-396 and Asp-399.

The protein belongs to the glycosyl hydrolase 53 family. Ca(2+) serves as cofactor.

The protein localises to the secreted. The catalysed reaction is The enzyme specifically hydrolyzes (1-&gt;4)-beta-D-galactosidic linkages in type I arabinogalactans.. Involved in galactan degradation. Degrades arabinose-free galactan to galactooligosaccharides, producing galactotetraose as the main product along with galactotriose, galactobiose, and galactose. Is also able to degrade galactotetraose, galactotriose and galactobiose, suggesting an additional exo-mode of activity. May hydrolyze the beta-1,4-galactan linkages of the galactan portion of arabinogalactan type I, a pectic plant polysaccharide from which most of the arabinose has been removed. This chain is Endo-beta-1,4-galactanase, found in Bacillus subtilis (strain 168).